The chain runs to 361 residues: UDP-3-O-acylglucosamine N-acyltransferase (361 aa).

Catalysis depends on H258, which acts as the Proton acceptor.

It belongs to the transferase hexapeptide repeat family. LpxD subfamily. As to quaternary structure, homotrimer.

It carries out the reaction a UDP-3-O-[(3R)-3-hydroxyacyl]-alpha-D-glucosamine + a (3R)-hydroxyacyl-[ACP] = a UDP-2-N,3-O-bis[(3R)-3-hydroxyacyl]-alpha-D-glucosamine + holo-[ACP] + H(+). It participates in bacterial outer membrane biogenesis; LPS lipid A biosynthesis. Its function is as follows. Catalyzes the N-acylation of UDP-3-O-acylglucosamine using 3-hydroxyacyl-ACP as the acyl donor. Is involved in the biosynthesis of lipid A, a phosphorylated glycolipid that anchors the lipopolysaccharide to the outer membrane of the cell. The polypeptide is UDP-3-O-acylglucosamine N-acyltransferase (Nitrobacter hamburgensis (strain DSM 10229 / NCIMB 13809 / X14)).